A 708-amino-acid chain; its full sequence is Lactotransferrin (708 aa).

An N-terminal signal peptide occupies residues 1-19; it reads MKLFFPALLSLGALGLCLA. Transferrin-like domains are found at residues 25–352 and 364–693; these read VRWC…GLRE and VVWC…KLRR. Cystine bridges form between Cys28–Cys64 and Cys38–Cys55. The interaction with E.coli ompC stretch occupies residues 44-51; the sequence is RMKKVRGP. Asp79 lines the Fe(3+) pocket. The active site involves Lys92. Tyr111 provides a ligand contact to Fe(3+). Cystine bridges form between Cys134-Cys217, Cys176-Cys192, Cys179-Cys202, Cys189-Cys200, and Cys250-Cys264. Residues Thr136, Arg140, Ala142, and Gly143 each contribute to the hydrogencarbonate site. Tyr211 provides a ligand contact to Fe(3+). N-linked (GlcNAc...) asparagine glycosylation occurs at Asn252. His272 contributes to the Fe(3+) binding site. The Nucleophile role is filled by Ser278. 2 cysteine pairs are disulfide-bonded: Cys367–Cys399 and Cys377–Cys390. Residue Asn385 is glycosylated (N-linked (GlcNAc...) asparagine). Asp414 and Tyr452 together coordinate Fe(3+). 8 cysteine pairs are disulfide-bonded: Cys424-Cys703, Cys444-Cys666, Cys476-Cys551, Cys500-Cys694, Cys510-Cys524, Cys521-Cys534, Cys592-Cys606, and Cys644-Cys649. Hydrogencarbonate-binding residues include Thr478, Arg482, Ala484, and Gly485. Asn537 carries N-linked (GlcNAc...) asparagine glycosylation. Position 545 (Tyr545) interacts with Fe(3+). N-linked (GlcNAc...) asparagine glycosylation is present at Asn594. Residue His614 participates in Fe(3+) binding.

This sequence belongs to the transferrin family. Monomer. Found in a complex with LTF, CLU, EPPIN and SEMG1. Interacts with E.coli outer membrane protein C (OmpC). Found in a complex with MPO and LTF; interacts directly with CP, allows Fe(3+) incorporation into LTF and activation of CP ferroxidase activity. Post-translationally, poly-N-acetyllactosaminic carbohydrate moiety seems to be needed for TLR4 activation.

The protein resides in the secreted. It localises to the cytoplasmic granule. Functionally, transferrins are iron binding transport proteins which can bind two Fe(3+) ions in association with the binding of an anion, usually bicarbonate. Major iron-binding and multifunctional protein found in exocrine fluids such as breast milk and mucosal secretions. Has antimicrobial activity, which depends on the extracellular cation concentration. Antimicrobial properties include bacteriostasis, which is related to its ability to sequester free iron and thus inhibit microbial growth, as well as direct bactericidal properties leading to the release of lipopolysaccharides from the bacterial outer membrane. Can also prevent bacterial biofilm development in P.aeruginosa infection. Has weak antifungal activity against C.albicans. Has anabolic, differentiating and anti-apoptotic effects on osteoblasts and can also inhibit osteoclastogenesis, possibly playing a role in the regulation of bone growth. Promotes binding of species C adenoviruses to epithelial cells, promoting adenovirus infection. Can inhibit papillomavirus infections. Stimulates the TLR4 signaling pathway leading to NF-kappa-B activation and subsequent pro-inflammatory cytokine production while also interfering with the lipopolysaccharide (LPS)-stimulated TLR4 signaling. Inhibits neutrophil granulocyte migration to sites of apoptosis, when secreted by apoptotic cells. Stimulates VEGFA-mediated endothelial cell migration and proliferation. Binds heparin, chondroitin sulfate and possibly other glycosaminoglycans (GAGs). Also binds specifically to pneumococcal surface protein A (PspA), the lipid A portion of bacterial lipopolysaccharide (LPS), lysozyme and DNA. Its function is as follows. Lactoferricin binds to the bacterial surface and is crucial for the bactericidal functions. Has some antiviral activity against papillomavirus infection. N-terminal region shows strong antifungal activity against C.albicans. Contains two BBXB heparin-binding consensus sequences that appear to form the predominate functional GAG-binding site. In terms of biological role, the lactotransferrin transferrin-like domain 1 functions as a serine protease of the peptidase S60 family that cuts arginine rich regions. This function contributes to the antimicrobial activity. Shows a preferential cleavage at -Arg-Ser-Arg-Arg-|- and -Arg-Arg-Ser-Arg-|-, and of Z-Phe-Arg-|-aminomethylcoumarin sites. The polypeptide is Lactotransferrin (LTF) (Camelus dromedarius (Dromedary)).